The sequence spans 146 residues: Putative pre-16S rRNA nuclease (146 aa).

The protein belongs to the YqgF nuclease family.

Its subcellular location is the cytoplasm. In terms of biological role, could be a nuclease involved in processing of the 5'-end of pre-16S rRNA. The protein is Putative pre-16S rRNA nuclease of Burkholderia thailandensis (strain ATCC 700388 / DSM 13276 / CCUG 48851 / CIP 106301 / E264).